The sequence spans 92 residues: Protein OPG096 (92 aa).

Helical transmembrane passes span 39 to 59 (PLIRLFIDILLFVIVIYIFTV) and 67 to 87 (QILLVLVALVITLTIFLLLYT).

This sequence belongs to the orthopoxvirus OPG096 family. Interacts with OPG158.

The protein localises to the virion membrane. The protein resides in the host cytoplasm. Its subcellular location is the host endoplasmic reticulum membrane. Functionally, early protein involved in virion morphogenesis. Participates in the formation and elongation of crescent-shaped membrane precursors of immature virions in cytoplasmic factories. The sequence is that of Protein OPG096 (OPG096) from Monkeypox virus.